The primary structure comprises 307 residues: 4-hydroxy-tetrahydrodipicolinate synthase (307 aa).

T57 is a pyruvate binding site. The active-site Proton donor/acceptor is the Y145. Catalysis depends on K173, which acts as the Schiff-base intermediate with substrate. V215 lines the pyruvate pocket.

Belongs to the DapA family. Homotetramer; dimer of dimers.

The protein resides in the cytoplasm. The catalysed reaction is L-aspartate 4-semialdehyde + pyruvate = (2S,4S)-4-hydroxy-2,3,4,5-tetrahydrodipicolinate + H2O + H(+). It functions in the pathway amino-acid biosynthesis; L-lysine biosynthesis via DAP pathway; (S)-tetrahydrodipicolinate from L-aspartate: step 3/4. Catalyzes the condensation of (S)-aspartate-beta-semialdehyde [(S)-ASA] and pyruvate to 4-hydroxy-tetrahydrodipicolinate (HTPA). The sequence is that of 4-hydroxy-tetrahydrodipicolinate synthase from Leptospira interrogans serogroup Icterohaemorrhagiae serovar copenhageni (strain Fiocruz L1-130).